A 155-amino-acid chain; its full sequence is Ribonuclease H (155 aa).

The RNase H type-1 domain maps to Q4–T145. Residues D13, E51, D73, and D137 each contribute to the Mg(2+) site.

This sequence belongs to the RNase H family. Monomer. Mg(2+) is required as a cofactor.

Its subcellular location is the cytoplasm. It carries out the reaction Endonucleolytic cleavage to 5'-phosphomonoester.. Endonuclease that specifically degrades the RNA of RNA-DNA hybrids. The polypeptide is Ribonuclease H (Bartonella quintana (strain Toulouse) (Rochalimaea quintana)).